Here is a 351-residue protein sequence, read N- to C-terminus: MPGATEKGSELSERIESFVEALKRGGGQRSSEDMARETLGLLRRIITDHRWSNAGELMELIRREGRRMMAAQPSETTVGNMVRRVLKIIREEYGRLHGRSDESDQQESLHKLLTSGGLSEDFSFHYAQLQSNIVEAINELLVELEGTTENIAAQALEHIHSNEVIMTIGLSRTVEAFLREAARKRKFHVIVAECAPFCQGHEMAVNLSKAGIETTVMTDAAIFAVMSRVNKVIIGTKTILANGALRAVTGTHTLALAAKHHSTPLIVCAPMFKLSPQFPNEEDSFHKFVAPEEVLPFTEGDILDKVGCHCPVFDYVPPELITLFISNIGGNAPSYIYRLMSELYHPEDHVL.

The protein belongs to the eIF-2B alpha/beta/delta subunits family. In terms of assembly, component of the translation initiation factor 2B (eIF2B) complex which is a heterodecamer of two sets of five different subunits: alpha, beta, gamma, delta and epsilon. Subunits alpha, beta and delta comprise a regulatory subcomplex and subunits epsilon and gamma comprise a catalytic subcomplex. Within the complex, the hexameric regulatory complex resides at the center, with the two heterodimeric catalytic subcomplexes bound on opposite sides.

The protein resides in the cytoplasm. It localises to the cytosol. Activated by the chemical integrated stress response (ISR) inhibitor ISRIB which stimulates guanine nucleotide exchange factor activity for both phosphorylated and unphosphorylated eIF2. Functionally, acts as a component of the translation initiation factor 2B (eIF2B) complex, which catalyzes the exchange of GDP for GTP on eukaryotic initiation factor 2 (eIF2) gamma subunit. Its guanine nucleotide exchange factor activity is repressed when bound to eIF2 complex phosphorylated on the alpha subunit, thereby limiting the amount of methionyl-initiator methionine tRNA available to the ribosome and consequently global translation is repressed. The polypeptide is Translation initiation factor eIF2B subunit beta (EIF2B2) (Oryctolagus cuniculus (Rabbit)).